The chain runs to 311 residues: Ribosomal RNA small subunit methyltransferase H (311 aa).

Residues 33–35 (AGH), aspartate 53, phenylalanine 80, aspartate 101, and glutamine 108 contribute to the S-adenosyl-L-methionine site.

This sequence belongs to the methyltransferase superfamily. RsmH family.

Its subcellular location is the cytoplasm. It carries out the reaction cytidine(1402) in 16S rRNA + S-adenosyl-L-methionine = N(4)-methylcytidine(1402) in 16S rRNA + S-adenosyl-L-homocysteine + H(+). Its function is as follows. Specifically methylates the N4 position of cytidine in position 1402 (C1402) of 16S rRNA. The sequence is that of Ribosomal RNA small subunit methyltransferase H from Clostridioides difficile (strain 630) (Peptoclostridium difficile).